We begin with the raw amino-acid sequence, 478 residues long: Chromosomal replication initiator protein DnaA (478 aa).

A domain I, interacts with DnaA modulators region spans residues 1–71 (MNLTHIWKTT…RNALTRVVGY (71 aa)). A domain II region spans residues 71–136 (YPVQVQVLIA…LDLASAMRSG (66 aa)). Residues 137–353 (MLNPRYTFAS…GSLNRVAAYA (217 aa)) form a domain III, AAA+ region region. ATP-binding residues include G181, G183, K184, and T185. The segment at 354–478 (ELNRLPITID…RERIQMMRGL (125 aa)) is domain IV, binds dsDNA.

It belongs to the DnaA family. As to quaternary structure, oligomerizes as a right-handed, spiral filament on DNA at oriC.

The protein localises to the cytoplasm. Functionally, plays an essential role in the initiation and regulation of chromosomal replication. ATP-DnaA binds to the origin of replication (oriC) to initiate formation of the DNA replication initiation complex once per cell cycle. Binds the DnaA box (a 9 base pair repeat at the origin) and separates the double-stranded (ds)DNA. Forms a right-handed helical filament on oriC DNA; dsDNA binds to the exterior of the filament while single-stranded (ss)DNA is stabiized in the filament's interior. The ATP-DnaA-oriC complex binds and stabilizes one strand of the AT-rich DNA unwinding element (DUE), permitting loading of DNA polymerase. After initiation quickly degrades to an ADP-DnaA complex that is not apt for DNA replication. Binds acidic phospholipids. In Chloroflexus aggregans (strain MD-66 / DSM 9485), this protein is Chromosomal replication initiator protein DnaA.